The following is a 721-amino-acid chain: S-adenosyl-L-methionine-dependent tRNA 4-demethylwyosine synthase TYW1 (721 aa).

Residues 71–229 (VKIFYGSQTG…DFTAWKTKFI (159 aa)) enclose the Flavodoxin-like domain. Residues 77-81 (SQTGT) and 168-200 (VFGL…QRVL) each bind FMN. Disordered stretches follow at residues 242 to 291 (ACGG…ELGT) and 305 to 339 (DLGN…TEDG). Over residues 250–274 (GKCESAQHGPGEARPHPQGELHPGD) the composition is skewed to basic and acidic residues. Positions 275–290 (AEEEEPCESSSEDELG) are enriched in acidic residues. The span at 313–325 (VKREKREKSHQDG) shows a compositional bias: basic and acidic residues. In terms of domain architecture, Radical SAM core spans 389-635 (YGIESHRCME…LLPDYEVACE (247 aa)). [4Fe-4S] cluster is bound by residues cysteine 405, cysteine 409, and cysteine 412.

It belongs to the TYW1 family. The cofactor is [4Fe-4S] cluster.

It catalyses the reaction N(1)-methylguanosine(37) in tRNA(Phe) + pyruvate + S-adenosyl-L-methionine = 4-demethylwyosine(37) in tRNA(Phe) + 5'-deoxyadenosine + L-methionine + CO2 + H2O. It participates in tRNA modification; wybutosine-tRNA(Phe) biosynthesis. Probable component of the wybutosine biosynthesis pathway. Wybutosine is a hyper modified guanosine with a tricyclic base found at the 3'-position adjacent to the anticodon of eukaryotic phenylalanine tRNA. Catalyzes the condensation of N-methylguanine with 2 carbon atoms from pyruvate to form the tricyclic 4-demethylwyosine, an intermediate in wybutosine biosynthesis. This is S-adenosyl-L-methionine-dependent tRNA 4-demethylwyosine synthase TYW1 (Tyw1) from Mus musculus (Mouse).